Here is a 104-residue protein sequence, read N- to C-terminus: Complex III assembly factor LYRM7 (104 aa).

It belongs to the complex I LYR family. Interacts with UQCRFS1.

It localises to the mitochondrion matrix. Assembly factor required for Rieske Fe-S protein UQCRFS1 incorporation into the cytochrome b-c1 (CIII) complex. Functions as a chaperone, binding to this subunit within the mitochondrial matrix and stabilizing it prior to its translocation and insertion into the late CIII dimeric intermediate within the mitochondrial inner membrane. This chain is Complex III assembly factor LYRM7 (LYRM7), found in Danio rerio (Zebrafish).